Consider the following 381-residue polypeptide: Subtilisin amylosacchariticus (381 aa).

The first 29 residues, 1 to 29 (MRSKKLWISLLFALTLIFTMAFSNMSAQA), serve as a signal peptide directing secretion. Residues 30–106 (AGKSSTEKKY…VEEDHIAHEY (77 aa)) constitute a propeptide that is removed on maturation. In terms of domain architecture, Inhibitor I9 spans 38–103 (KYIVGFKQTM…VAYVEEDHIA (66 aa)). Position 108 (glutamine 108) interacts with Ca(2+). In terms of domain architecture, Peptidase S8 spans 111–380 (PYGISQIKAP…KGLINVQAAA (270 aa)). Catalysis depends on aspartate 138, which acts as the Charge relay system. Aspartate 147 is a Ca(2+) binding site. The active-site Charge relay system is histidine 170. Ca(2+) is bound by residues leucine 181, asparagine 183, isoleucine 185, valine 187, alanine 275, tyrosine 277, and threonine 280. Serine 327 serves as the catalytic Charge relay system.

The protein belongs to the peptidase S8 family. Ca(2+) serves as cofactor.

Its subcellular location is the secreted. The catalysed reaction is Hydrolysis of proteins with broad specificity for peptide bonds, and a preference for a large uncharged residue in P1. Hydrolyzes peptide amides.. Subtilisin is an extracellular alkaline serine protease, it catalyzes the hydrolysis of proteins and peptide amides. The polypeptide is Subtilisin amylosacchariticus (apr) (Bacillus subtilis subsp. amylosacchariticus).